Here is a 366-residue protein sequence, read N- to C-terminus: Terpene synthase 4 (366 aa).

The DDxx(x)D/E motif motif lies at Asp91 to Arg96. Residues Asn241–Glu249 carry the NDxxSxxxD/E motif motif.

The protein belongs to the terpene synthase family.

It catalyses the reaction (2E,6E)-farnesyl diphosphate = (1S,2S,4R)-beta-elemene + diphosphate. Functionally, terpene synthase that converts its substrate farnesyl diphosphate (FPP) into the sesquiterpenes bicycloelemene, beta-elemene and 2 yet unidentified sesquiterpenes. This Dictyostelium purpureum (Slime mold) protein is Terpene synthase 4.